A 457-amino-acid polypeptide reads, in one-letter code: Argininosuccinate lyase (457 aa).

It belongs to the lyase 1 family. Argininosuccinate lyase subfamily.

The protein localises to the cytoplasm. It carries out the reaction 2-(N(omega)-L-arginino)succinate = fumarate + L-arginine. Its pathway is amino-acid biosynthesis; L-arginine biosynthesis; L-arginine from L-ornithine and carbamoyl phosphate: step 3/3. This is Argininosuccinate lyase from Escherichia coli O157:H7 (strain EC4115 / EHEC).